The primary structure comprises 349 residues: UDP-3-O-acylglucosamine N-acyltransferase (349 aa).

The Proton acceptor role is filled by H248.

The protein belongs to the transferase hexapeptide repeat family. LpxD subfamily. In terms of assembly, homotrimer.

The catalysed reaction is a UDP-3-O-[(3R)-3-hydroxyacyl]-alpha-D-glucosamine + a (3R)-hydroxyacyl-[ACP] = a UDP-2-N,3-O-bis[(3R)-3-hydroxyacyl]-alpha-D-glucosamine + holo-[ACP] + H(+). It participates in bacterial outer membrane biogenesis; LPS lipid A biosynthesis. Catalyzes the N-acylation of UDP-3-O-acylglucosamine using 3-hydroxyacyl-ACP as the acyl donor. Is involved in the biosynthesis of lipid A, a phosphorylated glycolipid that anchors the lipopolysaccharide to the outer membrane of the cell. This Colwellia psychrerythraea (strain 34H / ATCC BAA-681) (Vibrio psychroerythus) protein is UDP-3-O-acylglucosamine N-acyltransferase.